The primary structure comprises 213 residues: Small ribosomal subunit protein uS5 (213 aa).

The disordered stretch occupies residues 1–42 (MSERDRNGGRSADNNRNDRNERGGRNDRGGRNDRRNNQQDER). In terms of domain architecture, S5 DRBM spans 45 to 108 (YIERVVTINR…EEARKNFFRV (64 aa)).

Belongs to the universal ribosomal protein uS5 family. Part of the 30S ribosomal subunit. Contacts proteins S4 and S8.

Its function is as follows. With S4 and S12 plays an important role in translational accuracy. In terms of biological role, located at the back of the 30S subunit body where it stabilizes the conformation of the head with respect to the body. The protein is Small ribosomal subunit protein uS5 of Corynebacterium urealyticum (strain ATCC 43042 / DSM 7109).